A 1180-amino-acid polypeptide reads, in one-letter code: DNA-directed RNA polymerase subunit beta (1180 aa).

The protein belongs to the RNA polymerase beta chain family. In terms of assembly, the RNAP catalytic core consists of 2 alpha, 1 beta, 1 beta' and 1 omega subunit. When a sigma factor is associated with the core the holoenzyme is formed, which can initiate transcription.

The catalysed reaction is RNA(n) + a ribonucleoside 5'-triphosphate = RNA(n+1) + diphosphate. Its function is as follows. DNA-dependent RNA polymerase catalyzes the transcription of DNA into RNA using the four ribonucleoside triphosphates as substrates. This is DNA-directed RNA polymerase subunit beta from Macrococcus caseolyticus (strain JCSC5402) (Macrococcoides caseolyticum).